The chain runs to 312 residues: Very-long-chain 3-oxoacyl-CoA reductase (312 aa).

The next 3 membrane-spanning stretches (helical) occupy residues 33 to 53 (VWGI…WAVV), 181 to 201 (GVIL…LTLY), and 274 to 294 (HAFM…NLLM). Residue 48-77 (GAWAVVTGATDGIGKAYAKELAKRGMKVAL) participates in NADP(+) binding. Residue Ser188 participates in substrate binding. Tyr201 acts as the Proton acceptor in catalysis.

This sequence belongs to the short-chain dehydrogenases/reductases (SDR) family. 17-beta-HSD 3 subfamily. Brain.

The protein resides in the endoplasmic reticulum membrane. The catalysed reaction is a very-long-chain (3R)-3-hydroxyacyl-CoA + NADP(+) = a very-long-chain 3-oxoacyl-CoA + NADPH + H(+). It catalyses the reaction 17beta-estradiol + NAD(+) = estrone + NADH + H(+). It carries out the reaction 17beta-estradiol + NADP(+) = estrone + NADPH + H(+). The enzyme catalyses 3-oxooctadecanoyl-CoA + NADPH + H(+) = (3R)-hydroxyoctadecanoyl-CoA + NADP(+). The catalysed reaction is (7Z,10Z,13Z,16Z)-3-oxodocosatetraenoyl-CoA + NADPH + H(+) = (3R)-hydroxy-(7Z,10Z,13Z,16Z)-docosatetraenoyl-CoA + NADP(+). It catalyses the reaction 3-oxo-(7Z,10Z,13Z,16Z,19Z)-docosapentaenoyl-CoA + NADPH + H(+) = (3R)-hydroxy-(7Z,10Z,13Z,16Z,19Z)-docosapentaenoyl-CoA + NADP(+). It carries out the reaction (8Z,11Z,14Z)-3-oxoeicosatrienoyl-CoA + NADPH + H(+) = (3R)-hydroxy-(8Z,11Z,14Z)-eicosatrienoyl-CoA + NADP(+). It functions in the pathway lipid metabolism; fatty acid biosynthesis. Its pathway is steroid biosynthesis; estrogen biosynthesis. Catalyzes the second of the four reactions of the long-chain fatty acids elongation cycle. This endoplasmic reticulum-bound enzymatic process, allows the addition of two carbons to the chain of long- and very long-chain fatty acids/VLCFAs per cycle. This enzyme has a 3-ketoacyl-CoA reductase activity, reducing 3-ketoacyl-CoA to 3-hydroxyacyl-CoA, within each cycle of fatty acid elongation. Thereby, it may participate in the production of VLCFAs of different chain lengths that are involved in multiple biological processes as precursors of membrane lipids and lipid mediators. May also catalyze the transformation of estrone (E1) into estradiol (E2) and play a role in estrogen formation. The protein is Very-long-chain 3-oxoacyl-CoA reductase (HSD17B12) of Anas platyrhynchos (Mallard).